The primary structure comprises 407 residues: tRNA (guanine(26)-N(2))-dimethyltransferase (407 aa).

The region spanning 10 to 400 is the Trm1 methyltransferase domain; it reads AVTHEGRSII…APWGEVLEAV (391 aa). S-adenosyl-L-methionine-binding residues include Arg50, Arg82, Asp99, and Glu128.

This sequence belongs to the class I-like SAM-binding methyltransferase superfamily. Trm1 family.

The catalysed reaction is guanosine(26) in tRNA + 2 S-adenosyl-L-methionine = N(2)-dimethylguanosine(26) in tRNA + 2 S-adenosyl-L-homocysteine + 2 H(+). Functionally, dimethylates a single guanine residue at position 26 of a number of tRNAs using S-adenosyl-L-methionine as donor of the methyl groups. The polypeptide is tRNA (guanine(26)-N(2))-dimethyltransferase (Aeropyrum pernix (strain ATCC 700893 / DSM 11879 / JCM 9820 / NBRC 100138 / K1)).